The primary structure comprises 205 residues: Guanylate kinase (205 aa).

Positions 6 to 184 (GLLIVLSGPA…AVERIKAIVT (179 aa)) constitute a Guanylate kinase-like domain. 13 to 20 (GPAGVGKG) contributes to the ATP binding site.

It belongs to the guanylate kinase family.

It is found in the cytoplasm. The enzyme catalyses GMP + ATP = GDP + ADP. Its function is as follows. Essential for recycling GMP and indirectly, cGMP. The chain is Guanylate kinase from Shouchella clausii (strain KSM-K16) (Alkalihalobacillus clausii).